The chain runs to 73 residues: Small ribosomal subunit protein bS18 (73 aa).

Belongs to the bacterial ribosomal protein bS18 family. Part of the 30S ribosomal subunit. Forms a tight heterodimer with protein bS6.

Functionally, binds as a heterodimer with protein bS6 to the central domain of the 16S rRNA, where it helps stabilize the platform of the 30S subunit. This Coxiella burnetii (strain Dugway 5J108-111) protein is Small ribosomal subunit protein bS18.